Here is a 466-residue protein sequence, read N- to C-terminus: Asparagine--tRNA ligase (466 aa).

The protein belongs to the class-II aminoacyl-tRNA synthetase family. Homodimer.

The protein resides in the cytoplasm. The enzyme catalyses tRNA(Asn) + L-asparagine + ATP = L-asparaginyl-tRNA(Asn) + AMP + diphosphate + H(+). The polypeptide is Asparagine--tRNA ligase (Salmonella typhimurium (strain LT2 / SGSC1412 / ATCC 700720)).